The following is a 210-amino-acid chain: T-cell surface glycoprotein CD8 beta chain (210 aa).

The first 21 residues, M1–V21, serve as a signal peptide directing secretion. The 111-residue stretch at L22 to L132 folds into the Ig-like V-type domain. At L22–P170 the chain is on the extracellular side. A disulfide bridge links C41 with C116. Residue N102 is glycosylated (N-linked (GlcNAc...) asparagine). A helical membrane pass occupies residues I171–I191. At H192–K210 the chain is on the cytoplasmic side.

Forms disulfide-linked heterodimers with CD8A at the cell surface. Interacts with CD3D; this interaction couples TCR-CD3 with CD8. Interacts with LCK. In terms of processing, phosphorylated as a consequence of T-cell activation. Palmitoylated at the cytoplasmic tail and thereby targets the heterodimer CD8A/CD8B to lipid rafts unlike CD8A homodimers.

The protein resides in the cell membrane. Its function is as follows. Integral membrane glycoprotein that plays an essential role in the immune response and serves multiple functions in responses against both external and internal offenses. In T-cells, functions primarily as a coreceptor for MHC class I molecule:peptide complex. The antigens presented by class I peptides are derived from cytosolic proteins while class II derived from extracellular proteins. Interacts simultaneously with the T-cell receptor (TCR) and the MHC class I proteins presented by antigen presenting cells (APCs). In turn, recruits the Src kinase LCK to the vicinity of the TCR-CD3 complex. A palmitoylation site in the cytoplasmic tail of CD8B chain contributes to partitioning of CD8 into the plasma membrane lipid rafts where signaling proteins are enriched. Once LCK recruited, it initiates different intracellular signaling pathways by phosphorylating various substrates ultimately leading to lymphokine production, motility, adhesion and activation of cytotoxic T-lymphocytes (CTLs). Additionally, plays a critical role in thymic selection of CD8+ T-cells. In Pongo pygmaeus (Bornean orangutan), this protein is T-cell surface glycoprotein CD8 beta chain (CD8B).